Consider the following 499-residue polypeptide: Glycerol kinase (499 aa).

T13 contributes to the ADP binding site. ATP-binding residues include T13, T14, and S15. T13 lines the sn-glycerol 3-phosphate pocket. R17 serves as a coordination point for ADP. Positions 83, 84, 135, and 244 each coordinate sn-glycerol 3-phosphate. Glycerol contacts are provided by R83, E84, Y135, D244, and Q245. ADP-binding residues include T266 and G310. ATP is bound by residues T266, G310, Q314, and G411. The ADP site is built by G411 and N415.

The protein belongs to the FGGY kinase family.

It catalyses the reaction glycerol + ATP = sn-glycerol 3-phosphate + ADP + H(+). It functions in the pathway polyol metabolism; glycerol degradation via glycerol kinase pathway; sn-glycerol 3-phosphate from glycerol: step 1/1. Inhibited by fructose 1,6-bisphosphate (FBP). Functionally, key enzyme in the regulation of glycerol uptake and metabolism. Catalyzes the phosphorylation of glycerol to yield sn-glycerol 3-phosphate. The chain is Glycerol kinase from Pseudothermotoga lettingae (strain ATCC BAA-301 / DSM 14385 / NBRC 107922 / TMO) (Thermotoga lettingae).